Reading from the N-terminus, the 555-residue chain is Potassium-transporting ATPase potassium-binding subunit (555 aa).

The next 10 membrane-spanning stretches (helical) occupy residues 2–22, 60–80, 130–150, 173–193, 246–266, 278–298, 374–394, 412–432, 483–503, and 525–545; these read IWVAVVITMLLFILVAKPTGI, QYALSLVLLNGFMIVVVYFIF, IGITFLMFAAPATTLALVMAF, VFLPIAFIAALVFVALGVPQT, MSNILQMMLMMLLPTALPFTY, ILFVSLFMVFLLGFITITTSE, AGFVNIIMYAIIAVFISGLMV, LIAVTILFHPLLILGFSALAL, LVMFLGRYFSLITMLAVAASL, and GIFIGTIVIVGALTFFPMLVL.

It belongs to the KdpA family. In terms of assembly, the system is composed of three essential subunits: KdpA, KdpB and KdpC.

It is found in the cell membrane. In terms of biological role, part of the high-affinity ATP-driven potassium transport (or Kdp) system, which catalyzes the hydrolysis of ATP coupled with the electrogenic transport of potassium into the cytoplasm. This subunit binds the extracellular potassium ions and delivers the ions to the membrane domain of KdpB through an intramembrane tunnel. The sequence is that of Potassium-transporting ATPase potassium-binding subunit from Bacillus cereus (strain 03BB102).